Consider the following 161-residue polypeptide: ATP synthase subunit b (161 aa).

The chain crosses the membrane as a helical span at residues 11 to 31 (AISFVLFVWFCMKYIWPPIIL).

The protein belongs to the ATPase B chain family. In terms of assembly, F-type ATPases have 2 components, F(1) - the catalytic core - and F(0) - the membrane proton channel. F(1) has five subunits: alpha(3), beta(3), gamma(1), delta(1), epsilon(1). F(0) has three main subunits: a(1), b(2) and c(10-14). The alpha and beta chains form an alternating ring which encloses part of the gamma chain. F(1) is attached to F(0) by a central stalk formed by the gamma and epsilon chains, while a peripheral stalk is formed by the delta and b chains.

The protein localises to the cell membrane. Its function is as follows. F(1)F(0) ATP synthase produces ATP from ADP in the presence of a proton or sodium gradient. F-type ATPases consist of two structural domains, F(1) containing the extramembraneous catalytic core and F(0) containing the membrane proton channel, linked together by a central stalk and a peripheral stalk. During catalysis, ATP synthesis in the catalytic domain of F(1) is coupled via a rotary mechanism of the central stalk subunits to proton translocation. In terms of biological role, component of the F(0) channel, it forms part of the peripheral stalk, linking F(1) to F(0). The chain is ATP synthase subunit b from Buchnera aphidicola subsp. Acyrthosiphon pisum (strain APS) (Acyrthosiphon pisum symbiotic bacterium).